The sequence spans 483 residues: UDP-N-acetylmuramate--L-alanine ligase (483 aa).

Gly128–Thr134 contacts ATP.

The protein belongs to the MurCDEF family.

It is found in the cytoplasm. The catalysed reaction is UDP-N-acetyl-alpha-D-muramate + L-alanine + ATP = UDP-N-acetyl-alpha-D-muramoyl-L-alanine + ADP + phosphate + H(+). Its pathway is cell wall biogenesis; peptidoglycan biosynthesis. Its function is as follows. Cell wall formation. The sequence is that of UDP-N-acetylmuramate--L-alanine ligase from Shewanella violacea (strain JCM 10179 / CIP 106290 / LMG 19151 / DSS12).